We begin with the raw amino-acid sequence, 107 residues long: Holo-[acyl-carrier-protein] synthase (107 aa).

Mg(2+)-binding residues include D10 and E54.

Belongs to the P-Pant transferase superfamily. AcpS family. Mg(2+) serves as cofactor.

It is found in the cytoplasm. It carries out the reaction apo-[ACP] + CoA = holo-[ACP] + adenosine 3',5'-bisphosphate + H(+). Its function is as follows. Transfers the 4'-phosphopantetheine moiety from coenzyme A to a Ser of acyl-carrier-protein. The chain is Holo-[acyl-carrier-protein] synthase from Mycoplasma mobile (strain ATCC 43663 / 163K / NCTC 11711) (Mesomycoplasma mobile).